The chain runs to 528 residues: Phosphoenolpyruvate carboxykinase (ATP) (528 aa).

Substrate-binding residues include Arg-56, Tyr-192, and Lys-198. ATP contacts are provided by residues Lys-198, His-217, and 233–241; that span reads GLSGTGKTT. 2 residues coordinate Mn(2+): Lys-198 and His-217. Residue Asp-254 participates in Mn(2+) binding. The ATP site is built by Glu-282, Arg-319, and Thr-444. Residue Arg-319 participates in substrate binding.

The protein belongs to the phosphoenolpyruvate carboxykinase (ATP) family. Mn(2+) serves as cofactor.

It localises to the cytoplasm. It catalyses the reaction oxaloacetate + ATP = phosphoenolpyruvate + ADP + CO2. Its pathway is carbohydrate biosynthesis; gluconeogenesis. In terms of biological role, involved in the gluconeogenesis. Catalyzes the conversion of oxaloacetate (OAA) to phosphoenolpyruvate (PEP) through direct phosphoryl transfer between the nucleoside triphosphate and OAA. This Bacillus cereus (strain ATCC 10987 / NRS 248) protein is Phosphoenolpyruvate carboxykinase (ATP).